The chain runs to 100 residues: Protein RnfH (100 aa).

This sequence belongs to the UPF0125 (RnfH) family.

This chain is Protein RnfH, found in Actinobacillus succinogenes (strain ATCC 55618 / DSM 22257 / CCUG 43843 / 130Z).